Reading from the N-terminus, the 309-residue chain is Olfactory receptor 7A17 (309 aa).

At 1–25 (MEPENDTGISEFVLLGLSEEPELQP) the chain is on the extracellular side. N-linked (GlcNAc...) asparagine glycosylation occurs at N5. The helical transmembrane segment at 26 to 46 (FLFGLFLSMYLVTVLGNLLII) threads the bilayer. Topologically, residues 47–54 (LATISDSH) are cytoplasmic. The chain crosses the membrane as a helical span at residues 55 to 75 (LHTPMYFFLSNLSFADICFIS). Topologically, residues 76–99 (TTIPKMLINIQTQSRVITYAGCIT) are extracellular. Residues C97 and C189 are joined by a disulfide bond. A helical transmembrane segment spans residues 100 to 120 (QMCFFVLFGGLDSLLLAVMAY). At 121 to 139 (DRFVAICHPLHYTVIMNPR) the chain is on the cytoplasmic side. A helical transmembrane segment spans residues 140 to 160 (LCGLLVLASWMIAALNSLSQS). At 161–197 (LMVLWLSFCTDLEIPHFFCELNQVIHLACSDTFLNDM) the chain is on the extracellular side. A helical transmembrane segment spans residues 198-217 (GMYFAAGLLAGGPLVGILCS). The Cytoplasmic segment spans residues 218–237 (YSKIVSSIRAISSAQGKYKA). The chain crosses the membrane as a helical span at residues 238–258 (FSTCASHLSVVSLFCCTGLGV). The Extracellular segment spans residues 259 to 271 (YLTSAATHNSHTS). A helical membrane pass occupies residues 272 to 292 (ATASVMYTVATPMLNPFIYSL). Residues 293–309 (RNKDIKRALKMSFRGKQ) are Cytoplasmic-facing.

The protein belongs to the G-protein coupled receptor 1 family.

Its subcellular location is the cell membrane. Odorant receptor. In Homo sapiens (Human), this protein is Olfactory receptor 7A17 (OR7A17).